A 308-amino-acid polypeptide reads, in one-letter code: Maspardin (308 aa).

The AB hydrolase-1 domain maps to 87–159 (FCDGFRKLLD…NSFWLMPAFM (73 aa)). Position 304 is a phosphoserine (Ser304).

Belongs to the AB hydrolase superfamily. Interacts with CD4. Interacts with ALDH16A1. In terms of tissue distribution, expressed in all tissues tested, including heart, brain, placenta, lung, liver, skeletal muscle, kidney and pancreas. Expressed in J.CaM1.6, HuT 78 and HeLa cell lines (at protein level).

It localises to the cytoplasm. The protein localises to the cytosol. Its subcellular location is the membrane. It is found in the endosome membrane. The protein resides in the golgi apparatus. It localises to the trans-Golgi network membrane. Its function is as follows. May play a role as a negative regulatory factor in CD4-dependent T-cell activation. This chain is Maspardin (SPG21), found in Homo sapiens (Human).